A 472-amino-acid chain; its full sequence is F420-non-reducing hydrogenase subunit A (472 aa).

Residues C61, C64, C442, and C445 each contribute to the Ni(2+) site.

It belongs to the [NiFe]/[NiFeSe] hydrogenase large subunit family. As to quaternary structure, the F420-non-reducing hydrogenase is composed of three subunits; MvhA, MvhD and MvhG. It forms a complex with the heterodisulfide reductase (hdr). Ni(2+) serves as cofactor.

Its function is as follows. Part of a complex that provides reducing equivalents for heterodisulfide reductase. The sequence is that of F420-non-reducing hydrogenase subunit A (mvhA) from Methanothermobacter marburgensis (strain ATCC BAA-927 / DSM 2133 / JCM 14651 / NBRC 100331 / OCM 82 / Marburg) (Methanobacterium thermoautotrophicum).